Reading from the N-terminus, the 148-residue chain is MNFSFVPLFLVTLILLGVVSNNNSITVSATILLLMQQTALVQFVPLVEKHGLNLGIILLTIGVLSPLVSGKAQVPPVAEFLNFKMISAVFIGIFVAWLAGCGVPLMGRQPVLVTGLLIGTVIGVAFMGGIPVGPLIAADILSFVAGKV.

Transmembrane regions (helical) follow at residues 10–32 (LVTLILLGVVSNNNSITVSATIL), 50–70 (HGLNLGIILLTIGVLSPLVSG), 85–105 (MISAVFIGIFVAWLAGCGVPL), and 116–136 (LLIGTVIGVAFMGGIPVGPLI).

Belongs to the UPF0756 family.

It is found in the cell membrane. The chain is UPF0756 membrane protein NGK_2061 from Neisseria gonorrhoeae (strain NCCP11945).